Here is a 218-residue protein sequence, read N- to C-terminus: Stress response regulator protein 1 (218 aa).

The 120-residue stretch at 90 to 209 (RFLLVDDNSI…YRVVLDVVDN (120 aa)) folds into the Response regulatory domain. D142 is subject to 4-aspartylphosphate.

Its function is as follows. Required for stress adaptation, morphogenesis and virulence. The protein is Stress response regulator protein 1 (SRR1) of Meyerozyma guilliermondii (strain ATCC 6260 / CBS 566 / DSM 6381 / JCM 1539 / NBRC 10279 / NRRL Y-324) (Yeast).